We begin with the raw amino-acid sequence, 196 residues long: Purpurin (196 aa).

Residues Met-1–Ala-21 form the signal peptide. Intrachain disulfides connect Cys-24–Cys-182, Cys-90–Cys-196, and Cys-142–Cys-151.

It belongs to the calycin superfamily. Lipocalin family.

The protein localises to the secreted. Its subcellular location is the extracellular space. It localises to the extracellular matrix. The protein resides in the interphotoreceptor matrix. May be involved in the transport of retinol between the photoreceptors and the pigmented epithelium. The protein is Purpurin of Gallus gallus (Chicken).